The following is a 373-amino-acid chain: Phospho-N-acetylmuramoyl-pentapeptide-transferase (373 aa).

10 helical membrane passes run 28–48 (LLTV…TIAY), 72–92 (TPTM…LCWA), 94–114 (LANP…AVGW), 135–155 (YFWL…IASQ), 177–197 (IVPL…YFVI), 212–232 (GLAI…SYVS), 252–272 (VTIV…YNAH), 276–296 (VFMG…IAVM), 301–321 (IAFA…ILQV), and 350–370 (QVVV…LMTL).

Belongs to the glycosyltransferase 4 family. MraY subfamily. Mg(2+) serves as cofactor.

The protein localises to the cell inner membrane. The catalysed reaction is UDP-N-acetyl-alpha-D-muramoyl-L-alanyl-gamma-D-glutamyl-meso-2,6-diaminopimeloyl-D-alanyl-D-alanine + di-trans,octa-cis-undecaprenyl phosphate = di-trans,octa-cis-undecaprenyl diphospho-N-acetyl-alpha-D-muramoyl-L-alanyl-D-glutamyl-meso-2,6-diaminopimeloyl-D-alanyl-D-alanine + UMP. The protein operates within cell wall biogenesis; peptidoglycan biosynthesis. In terms of biological role, catalyzes the initial step of the lipid cycle reactions in the biosynthesis of the cell wall peptidoglycan: transfers peptidoglycan precursor phospho-MurNAc-pentapeptide from UDP-MurNAc-pentapeptide onto the lipid carrier undecaprenyl phosphate, yielding undecaprenyl-pyrophosphoryl-MurNAc-pentapeptide, known as lipid I. The sequence is that of Phospho-N-acetylmuramoyl-pentapeptide-transferase from Psychrobacter sp. (strain PRwf-1).